A 152-amino-acid polypeptide reads, in one-letter code: MFRGVNSISLDDKGRMAVPTRYRSELRESCEGQLVVTVGTDTCLLLFPLPEFEELERKLVKLPALNKQVKRLQRLLIGHAAECELDGQGRFLIPEPLRRFASLDKQVVLIGQGNKFEIWDEVLWDRCRQEWLEEASLEGLEDMGPELGALAF.

SpoVT-AbrB domains lie at 5–51 and 80–123; these read VNSI…PLPE and AAEC…DEVL.

Belongs to the MraZ family. In terms of assembly, forms oligomers.

It is found in the cytoplasm. Its subcellular location is the nucleoid. The protein is Transcriptional regulator MraZ of Methylococcus capsulatus (strain ATCC 33009 / NCIMB 11132 / Bath).